The primary structure comprises 409 residues: 2-methylfumaryl-CoA isomerase (409 aa).

Residue Asp-165 is the Nucleophile of the active site.

Belongs to the CoA-transferase III family. Mesaconyl-CoA isomerase subfamily. As to quaternary structure, homodimer.

It catalyses the reaction 2-methylfumaryl-CoA = 3-methylfumaryl-CoA. Its activity is regulated as follows. Partially inhibited by hydroxylamine. In terms of biological role, involved in the glyoxylate assimilation cycle used to regenerate acetyl-CoA and produce pyruvate as universal precursor for biosynthesis. This reaction involves an intramolecular CoA transferase that catalyzes the reversible transfer of the CoA moiety from the C1-carboxyl group of mesaconyl-CoA to the C4-carboxyl group. It does not require free mesaconate as CoA acceptor. This chain is 2-methylfumaryl-CoA isomerase (mct), found in Chloroflexus aurantiacus (strain ATCC 29366 / DSM 635 / J-10-fl).